The primary structure comprises 315 residues: Methionyl-tRNA formyltransferase (315 aa).

(6S)-5,6,7,8-tetrahydrofolate is bound at residue 113-116 (SILP).

The protein belongs to the Fmt family.

The enzyme catalyses L-methionyl-tRNA(fMet) + (6R)-10-formyltetrahydrofolate = N-formyl-L-methionyl-tRNA(fMet) + (6S)-5,6,7,8-tetrahydrofolate + H(+). Attaches a formyl group to the free amino group of methionyl-tRNA(fMet). The formyl group appears to play a dual role in the initiator identity of N-formylmethionyl-tRNA by promoting its recognition by IF2 and preventing the misappropriation of this tRNA by the elongation apparatus. The protein is Methionyl-tRNA formyltransferase of Vibrio vulnificus (strain YJ016).